The primary structure comprises 120 residues: Testis-expressed protein 48 (120 aa).

The segment covering 29–45 (KVPSQTQEHKPSTQNLL) has biased composition (polar residues). The interval 29-86 (KVPSQTQEHKPSTQNLLLQKDELDRQNPKRINAVSHLPSRTPLIQTKKSTSSSSSEFE) is disordered. The segment covering 74–83 (TKKSTSSSSS) has biased composition (low complexity).

This is Testis-expressed protein 48 from Homo sapiens (Human).